Reading from the N-terminus, the 208-residue chain is Thymidylate kinase (208 aa).

11-18 (GTEGVGKT) contributes to the ATP binding site.

The protein belongs to the thymidylate kinase family.

It carries out the reaction dTMP + ATP = dTDP + ADP. Functionally, phosphorylation of dTMP to form dTDP in both de novo and salvage pathways of dTTP synthesis. In Psychrobacter sp. (strain PRwf-1), this protein is Thymidylate kinase.